A 770-amino-acid polypeptide reads, in one-letter code: Integrin beta-2 (770 aa).

An N-terminal signal peptide occupies residues 1–22 (MLPQRPQLLLLAGLLSLQSVLS). The residue at position 23 (glutamine 23) is a Pyrrolidone carboxylic acid. The Extracellular segment spans residues 23 to 701 (QECTKYKVST…DMLECVKGPN (679 aa)). A PSI domain is found at 24 to 74 (ECTKYKVSTCRDCIESGPSCAWCQKLNFTGQGEPDSTRCDTRAQLLSKGCP). 28 disulfide bridges follow: cysteine 25/cysteine 43, cysteine 33/cysteine 447, cysteine 36/cysteine 62, cysteine 46/cysteine 73, cysteine 191/cysteine 198, cysteine 246/cysteine 286, cysteine 386/cysteine 400, cysteine 420/cysteine 445, cysteine 449/cysteine 467, cysteine 459/cysteine 470, cysteine 472/cysteine 481, cysteine 483/cysteine 514, cysteine 497/cysteine 512, cysteine 506/cysteine 517, cysteine 519/cysteine 534, cysteine 536/cysteine 559, cysteine 541/cysteine 557, cysteine 549/cysteine 562, cysteine 564/cysteine 573, cysteine 575/cysteine 598, cysteine 582/cysteine 596, cysteine 590/cysteine 601, cysteine 603/cysteine 612, cysteine 615/cysteine 618, cysteine 622/cysteine 663, cysteine 628/cysteine 647, cysteine 631/cysteine 643, and cysteine 671/cysteine 696. N-linked (GlcNAc...) asparagine glycosylation is found at asparagine 50 and asparagine 116. Residues 124 to 363 (GYPIDLYYLM…ELIKSAYNKL (240 aa)) form the VWFA domain. Mg(2+)-binding residues include serine 136 and serine 138. Ca(2+)-binding residues include serine 138, aspartate 141, aspartate 142, and aspartate 173. Positions 229, 231, 233, and 234 each coordinate Ca(2+). Glutamate 234 contributes to the Mg(2+) binding site. N-linked (GlcNAc...) asparagine glycosylation is present at asparagine 254. Aspartate 264 and glutamate 347 together coordinate Ca(2+). The Cell attachment site signature appears at 397 to 399 (RGD). I-EGF domains lie at 449-482 (CREA…KNCE), 483-535 (CQTH…QFCE), 536-574 (CDNV…SACQ), and 575-613 (CLKS…PLCI). The N-linked (GlcNAc...) asparagine glycan is linked to asparagine 501. Asparagine 642 carries an N-linked (GlcNAc...) asparagine glycan. The helical transmembrane segment at 702 to 724 (IAAIVGGTVGGVVLVGILLLAIW) threads the bilayer. Over 725-770 (KALTHLSDLREYHRFEKEKLKSQWNNDNPLFKSATTTVMNPKFAES) the chain is Cytoplasmic. Phosphoserine occurs at positions 746 and 757. Residues threonine 759 and threonine 761 each carry the phosphothreonine modification.

Belongs to the integrin beta chain family. As to quaternary structure, heterodimer of an alpha and a beta subunit. The ITGB2 beta subunit associates with the ITGAL, ITGAM, ITGAX or ITGAD alpha subunits. Found in a complex with CD177 and ITGAM/CD11b. Interacts with FGR. Interacts with COPS5 and RANBP9. Interacts with FLNA (via filamin repeats 4, 9, 12, 17, 19, 21, and 23). Interacts with THBD. Post-translationally, both Ser-746 and Ser-757 become phosphorylated when T-cells are exposed to phorbol esters. Phosphorylation on Thr-759 (but not on Ser-757) allows interaction with 14-3-3 proteins.

It localises to the cell membrane. Its subcellular location is the membrane raft. In terms of biological role, integrin ITGAL/ITGB2 is a receptor for ICAM1, ICAM2, ICAM3 and ICAM4. Integrin ITGAL/ITGB2 is also a receptor for the secreted form of ubiquitin-like protein ISG15; the interaction is mediated by ITGAL. Integrins ITGAM/ITGB2 and ITGAX/ITGB2 are receptors for the iC3b fragment of the third complement component and for fibrinogen. Integrin ITGAX/ITGB2 recognizes the sequence G-P-R in fibrinogen alpha-chain. Integrin ITGAM/ITGB2 recognizes P1 and P2 peptides of fibrinogen gamma chain. Integrin ITGAM/ITGB2 is also a receptor for factor X. Integrin ITGAD/ITGB2 is a receptor for ICAM3 and VCAM1. Contributes to natural killer cell cytotoxicity. Involved in leukocyte adhesion and transmigration of leukocytes including T-cells and neutrophils. Triggers neutrophil transmigration during lung injury through PTK2B/PYK2-mediated activation. Integrin ITGAL/ITGB2 in association with ICAM3, contributes to apoptotic neutrophil phagocytosis by macrophages. In association with alpha subunit ITGAM/CD11b, required for CD177-PRTN3-mediated activation of TNF primed neutrophils. This chain is Integrin beta-2 (ITGB2), found in Ovis canadensis (Bighorn sheep).